The chain runs to 411 residues: RING-H2 finger protein ATL65 (411 aa).

The segment at 1 to 32 (MRFVAPPPRSGDNSPSPSPSSGISEEILSRSS) is disordered. The segment covering 10 to 21 (SGDNSPSPSPSS) has biased composition (low complexity). A helical membrane pass occupies residues 36 to 56 (LEFSPPLIAMVVVLAAAFLFV). Residues 156–198 (CAVCLLEFEEGDYVRTLPLCFHAFHLECIDEWLRSHPNCPLCR) form an RING-type; atypical zinc finger.

This sequence belongs to the RING-type zinc finger family. ATL subfamily.

The protein localises to the membrane. It catalyses the reaction S-ubiquitinyl-[E2 ubiquitin-conjugating enzyme]-L-cysteine + [acceptor protein]-L-lysine = [E2 ubiquitin-conjugating enzyme]-L-cysteine + N(6)-ubiquitinyl-[acceptor protein]-L-lysine.. The protein operates within protein modification; protein ubiquitination. In Arabidopsis thaliana (Mouse-ear cress), this protein is RING-H2 finger protein ATL65 (ATL65).